Reading from the N-terminus, the 474-residue chain is Vasculin-like protein 1 (474 aa).

Residues 17 to 42 (QSAKSPTATFEKHGEHLPRGEGRFGV) form a disordered region. Residues 26 to 38 (FEKHGEHLPRGEG) show a composition bias toward basic and acidic residues. Phosphoserine occurs at positions 49 and 76. The segment at 91 to 191 (GNPSGWHSSS…VWENPPSAKQ (101 aa)) is disordered. The segment covering 116–128 (NHRHWNGSFHSRK) has biased composition (basic residues). Residues 136–154 (PPMEIREEKKEDKVEKLQF) show a composition bias toward basic and acidic residues. Ser202 bears the Phosphoserine mark. The tract at residues 238–371 (LVPKPVPPPS…EEGCHQNGLA (134 aa)) is disordered. The span at 262 to 277 (GSLSSSRESAFTSPIS) shows a compositional bias: polar residues. Residues 291–312 (SSPKESPSSTTPPIEISSSRLT) show a composition bias toward low complexity. Residue Ser292 is modified to Phosphoserine. Thr301 is modified (phosphothreonine). Composition is skewed to basic and acidic residues over residues 317-346 (RTTD…CDKL) and 356-365 (EPKENGEEGC). At Ser382 the chain carries Phosphoserine. Residues 453–474 (AEFEDSDTETSSSETSDDDAWK) are disordered.

It belongs to the vasculin family.

It is found in the nucleus. Possible transcription factor. The polypeptide is Vasculin-like protein 1 (GPBP1L1) (Homo sapiens (Human)).